Here is a 38-residue protein sequence, read N- to C-terminus: uncharacterized protein (38 aa).

This sequence belongs to the asfivirus C84L family.

This is an uncharacterized protein from Ornithodoros (relapsing fever ticks).